The chain runs to 130 residues: Large ribosomal subunit protein bL17 (130 aa).

This sequence belongs to the bacterial ribosomal protein bL17 family. In terms of assembly, part of the 50S ribosomal subunit. Contacts protein L32.

This is Large ribosomal subunit protein bL17 from Shewanella halifaxensis (strain HAW-EB4).